The chain runs to 436 residues: UPF0597 protein YhaM (436 aa).

It belongs to the UPF0597 family.

In Shigella dysenteriae serotype 1 (strain Sd197), this protein is UPF0597 protein YhaM.